We begin with the raw amino-acid sequence, 276 residues long: MLMITSFANPRVAQAFVDYMATQGVILTIQQHNQSDVWLADESLAERVRSELARFLENPADPRYLAASWQAGHTGSGLHYRRYPFFAALRERAGPVTWVMMIACVVVFIAMQILGDQEVMLWLAWPFDPTLKFEFWRYFTHALMHFSLMHILFNLLWWWYLGGAVEKRLGSGKLIVITLISALLSGYVQQKFSGPWFGGLSGVVYALMGYVWLRGERDPQSGIYLQRGLIIFALIWIVAGWFDLFGMSMANGAHIAGLAVGLAMAFVDSLNARKRK.

A run of 6 helical transmembrane segments spans residues 94–114 (GPVT…MQIL), 142–162 (ALMH…WYLG), 169–189 (LGSG…GYVQ), 192–212 (FSGP…GYVW), 229–249 (LIIF…GMSM), and 250–270 (ANGA…VDSL). The active-site Nucleophile is Ser201. The active site involves His254.

This sequence belongs to the peptidase S54 family.

It localises to the cell inner membrane. It carries out the reaction Cleaves type-1 transmembrane domains using a catalytic dyad composed of serine and histidine that are contributed by different transmembrane domains.. In terms of biological role, rhomboid-type serine protease that catalyzes intramembrane proteolysis. The chain is Rhomboid protease GlpG from Escherichia fergusonii (strain ATCC 35469 / DSM 13698 / CCUG 18766 / IAM 14443 / JCM 21226 / LMG 7866 / NBRC 102419 / NCTC 12128 / CDC 0568-73).